Consider the following 441-residue polypeptide: Transforming protein p54/c-ets-1 (441 aa).

Residues 51–136 (ATFSGFAKEQ…EHLEILQKEE (86 aa)) form the PNT domain. The interval 130-243 (EILQKEEAKP…DNMCMGRASR (114 aa)) is activation domain; required for transcription activation. The segment at 304-312 (FKDYVRDRA) is helix HI-1. The segment at 323–330 (AAALAGYT) is helix HI-2. A DNA-binding region (ETS) is located at residues 335-415 (IQLWQFLLEL…AGKRYVYRFV (81 aa)). Positions 418–422 (LQSLL) are helix H4. A helix H5 region spans residues 426–432 (PEELHAM).

This sequence belongs to the ETS family. Binds DNA as a homodimer; homodimerization is required for transcription activation.

It is found in the nucleus. The protein resides in the cytoplasm. With respect to regulation, autoinhibited by a module composed of four alpha helices (HI-1, HI-2, H4, and H5) that flank the DNA-binding ETS domain, reducing the affinity for DNA. Functionally, transcription factor. Directly controls the expression of cytokine and chemokine genes in a wide variety of different cellular contexts. The protein is Transforming protein p54/c-ets-1 (ETS1) of Gallus gallus (Chicken).